Reading from the N-terminus, the 314-residue chain is 3'-5' exoribonuclease YhaM (314 aa).

An HD domain is found at 163-279 (HVVSMLDLAK…LHYIDNLDAK (117 aa)).

This sequence belongs to the YhaM family.

Shows a 3'-5' exoribonuclease activity. The polypeptide is 3'-5' exoribonuclease YhaM (Bacillus cereus (strain G9842)).